Here is a 320-residue protein sequence, read N- to C-terminus: MIKKIGVLTSGGDAPGMNAAIRGVVRTALSERLEVFGIYDGYLGLYENRMVQLDRYSVSDMINRGGTFLGSARFASFYQDKIRSIAVQNIKKRKIDALVVIGGDGSYIGAQKLTEMGIPCISIPGTIDNDVSGTDYTIGYFTALQTVVEAIDRLRDTSSSHQRISIVEVMGRHCGDLTLAAAIAGGCEFIVLPEIDYKKEDLVIEIQAGIAKGKKHAIVAITEYICDVEELAQYIEKKTNRETRATILGHIQRGGAPVVYDRILASRMGAYSVELLIKGYQGKCVGIQNEKMVFNDIKNALKNMKRTFKKDWLITAKKLY.

Gly-12 serves as a coordination point for ATP. Residues 22–26 (RGVVR) and 55–60 (RYSVSD) each bind ADP. Residues 73–74 (RF) and 103–106 (GDGS) contribute to the ATP site. A Mg(2+)-binding site is contributed by Asp-104. 126-128 (TID) contributes to the substrate binding site. Catalysis depends on Asp-128, which acts as the Proton acceptor. Position 155 (Arg-155) interacts with ADP. Substrate contacts are provided by residues Arg-163 and 170-172 (MGR). ADP-binding positions include 186 to 188 (GCE), Lys-212, and 214 to 216 (KKH). Residues Glu-223, Arg-244, and 250–253 (HIQR) each bind substrate.

It belongs to the phosphofructokinase type A (PFKA) family. ATP-dependent PFK group I subfamily. Prokaryotic clade 'B1' sub-subfamily. In terms of assembly, homotetramer. Mg(2+) serves as cofactor.

Its subcellular location is the cytoplasm. The catalysed reaction is beta-D-fructose 6-phosphate + ATP = beta-D-fructose 1,6-bisphosphate + ADP + H(+). It functions in the pathway carbohydrate degradation; glycolysis; D-glyceraldehyde 3-phosphate and glycerone phosphate from D-glucose: step 3/4. With respect to regulation, allosterically activated by ADP and other diphosphonucleosides, and allosterically inhibited by phosphoenolpyruvate. In terms of biological role, catalyzes the phosphorylation of D-fructose 6-phosphate to fructose 1,6-bisphosphate by ATP, the first committing step of glycolysis. The chain is ATP-dependent 6-phosphofructokinase from Buchnera aphidicola subsp. Acyrthosiphon pisum (strain 5A).